Consider the following 156-residue polypeptide: Ribosomal RNA large subunit methyltransferase H (156 aa).

S-adenosyl-L-methionine-binding positions include Leu73, Gly104, and 123–128 (LSALTL).

Belongs to the RNA methyltransferase RlmH family. In terms of assembly, homodimer.

It is found in the cytoplasm. It carries out the reaction pseudouridine(1915) in 23S rRNA + S-adenosyl-L-methionine = N(3)-methylpseudouridine(1915) in 23S rRNA + S-adenosyl-L-homocysteine + H(+). Functionally, specifically methylates the pseudouridine at position 1915 (m3Psi1915) in 23S rRNA. This Shewanella denitrificans (strain OS217 / ATCC BAA-1090 / DSM 15013) protein is Ribosomal RNA large subunit methyltransferase H.